The sequence spans 271 residues: Thiazole synthase (271 aa).

The active-site Schiff-base intermediate with DXP is the Lys108. 1-deoxy-D-xylulose 5-phosphate is bound by residues Gly169, 195–196, and 217–218; these read AG and NS.

It belongs to the ThiG family. Homotetramer. Forms heterodimers with either ThiH or ThiS.

Its subcellular location is the cytoplasm. It carries out the reaction [ThiS sulfur-carrier protein]-C-terminal-Gly-aminoethanethioate + 2-iminoacetate + 1-deoxy-D-xylulose 5-phosphate = [ThiS sulfur-carrier protein]-C-terminal Gly-Gly + 2-[(2R,5Z)-2-carboxy-4-methylthiazol-5(2H)-ylidene]ethyl phosphate + 2 H2O + H(+). The protein operates within cofactor biosynthesis; thiamine diphosphate biosynthesis. Functionally, catalyzes the rearrangement of 1-deoxy-D-xylulose 5-phosphate (DXP) to produce the thiazole phosphate moiety of thiamine. Sulfur is provided by the thiocarboxylate moiety of the carrier protein ThiS. In vitro, sulfur can be provided by H(2)S. The chain is Thiazole synthase from Prochlorococcus marinus (strain SARG / CCMP1375 / SS120).